A 240-amino-acid polypeptide reads, in one-letter code: MKFSIITLFPKIINSYIEESIIKRAINKQAIKIEIIDLRNFSTLSHNQVDDYQYGGGSGMVLMIEPLIKAIESVKTTKSIVLLTTPQGKTLNQSIVKTYANNYEHIIIVCGHYEGYDERVLDYIDDEISIGDYVITGGELASLILVDSISRLLPNVIKQESHENESFENNLLDHPVYTKPYEFRNKKVPDVLLSGHHQNIKKWREEQQVIKTLKKRPDLIDITKLNRHQLEIYKKMKGEQ.

S-adenosyl-L-methionine is bound by residues Gly111 and 130–135 (IGDYVI).

The protein belongs to the RNA methyltransferase TrmD family. In terms of assembly, homodimer.

It localises to the cytoplasm. The enzyme catalyses guanosine(37) in tRNA + S-adenosyl-L-methionine = N(1)-methylguanosine(37) in tRNA + S-adenosyl-L-homocysteine + H(+). In terms of biological role, specifically methylates guanosine-37 in various tRNAs. The sequence is that of tRNA (guanine-N(1)-)-methyltransferase from Mycoplasma mycoides subsp. mycoides SC (strain CCUG 32753 / NCTC 10114 / PG1).